Consider the following 507-residue polypeptide: ATP synthase subunit alpha, chloroplastic (507 aa).

170 to 177 provides a ligand contact to ATP; it reads GDRQTGKT.

The protein belongs to the ATPase alpha/beta chains family. F-type ATPases have 2 components, CF(1) - the catalytic core - and CF(0) - the membrane proton channel. CF(1) has five subunits: alpha(3), beta(3), gamma(1), delta(1), epsilon(1). CF(0) has four main subunits: a, b, b' and c.

Its subcellular location is the plastid. It is found in the chloroplast thylakoid membrane. It carries out the reaction ATP + H2O + 4 H(+)(in) = ADP + phosphate + 5 H(+)(out). In terms of biological role, produces ATP from ADP in the presence of a proton gradient across the membrane. The alpha chain is a regulatory subunit. In Marchantia polymorpha (Common liverwort), this protein is ATP synthase subunit alpha, chloroplastic.